The following is a 403-amino-acid chain: Heparan-sulfate 6-O-sulfotransferase 2 (403 aa).

The Cytoplasmic segment spans residues 1-7 (MEDRSHK). Residues 8 to 28 (VLLALVMLFLFAVIVLQYVCP) form a helical; Signal-anchor for type II membrane protein membrane-spanning segment. Residues 29–403 (GTECQLLRLR…DYLGNVERWR (375 aa)) lie on the Lumenal side of the membrane. Asn-64 is a glycosylation site (N-linked (GlcNAc...) asparagine). A 3'-phosphoadenylyl sulfate-binding site is contributed by 88–96 (HIQKTGGTT). Substrate contacts are provided by residues 118-119 (KK), Arg-135, Trp-140, and His-145. His-145 (proton acceptor) is an active-site residue. Residues Arg-180 and Ser-188 each contribute to the 3'-phosphoadenylyl sulfate site. Positions 192 and 199 each coordinate substrate. N-linked (GlcNAc...) asparagine glycosylation is present at Asn-259. Residue 312 to 314 (TQY) coordinates 3'-phosphoadenylyl sulfate. Residue Asn-315 is glycosylated (N-linked (GlcNAc...) asparagine). 318 to 319 (RA) lines the 3'-phosphoadenylyl sulfate pocket. The disordered stretch occupies residues 381–403 (AHLREQGENSSSTDYLGNVERWR). Residue Asn-389 is glycosylated (N-linked (GlcNAc...) asparagine).

It belongs to the sulfotransferase 6 family.

The protein resides in the membrane. It catalyses the reaction alpha-D-glucosaminyl-[heparan sulfate](n) + 3'-phosphoadenylyl sulfate = 6-sulfo-alpha-D-glucosaminyl-[heparan sulfate](n) + adenosine 3',5'-bisphosphate + H(+). Functionally, 6-O-sulfation enzyme which catalyzes the transfer of sulfate from 3'-phosphoadenosine 5'-phosphosulfate (PAPS) to position 6 of the N-sulfoglucosamine residue (GlcNS) of heparan sulfate. May also play a role in limb development. In Gallus gallus (Chicken), this protein is Heparan-sulfate 6-O-sulfotransferase 2 (HS6ST2).